A 376-amino-acid chain; its full sequence is Protein XRP2 (376 aa).

The disordered stretch occupies residues 1–55 (MGCFFSKKSRRKSPKKDAALPTGDESATGNDLAETNNTALGSNSNQEAPKQYSWD). Residue Gly-2 is the site of N-myristoyl glycine attachment. A lipid anchor (S-palmitoyl cysteine) is attached at Cys-3. Polar residues predominate over residues 25–48 (ESATGNDLAETNNTALGSNSNQEA). The C-CAP/cofactor C-like domain maps to 49 to 204 (PKQYSWDKRE…NWSNIHDFTP (156 aa)). GTP-binding positions include 123 to 124 (GS) and 140 to 143 (QQFR).

It belongs to the TBCC family. Post-translationally, myristoylated on Gly-2; which may be required for membrane targeting. In terms of processing, palmitoylated on Cys-3; which may be required for plasma membrane targeting. In terms of tissue distribution, in the retina, detected in both rod and cone photoreceptors (at protein level). Has strongest expression in the retinal outer nuclear layer (ONL) and weaker expression in the outer plexiform layer (OPL) and inner plexiform layer (IPL) (at protein level). Expressed in all tissues tested.

It localises to the cell membrane. The protein resides in the cell projection. It is found in the cilium. Functionally, acts as a GTPase-activating protein (GAP) involved in trafficking between the Golgi and the ciliary membrane. Acts as a GTPase-activating protein (GAP) for tubulin in concert with tubulin-specific chaperone C, but does not enhance tubulin heterodimerization. In the retina, required for maintenance of rod and cone photoreceptor cells. May have a role in normal retinal localization of the transducins GNB1 and GNAT1, and the rhodopsin kinase GRK1. This is Protein XRP2 from Danio rerio (Zebrafish).